The primary structure comprises 208 residues: N-(5'-phosphoribosyl)anthranilate isomerase (208 aa).

Belongs to the TrpF family.

It carries out the reaction N-(5-phospho-beta-D-ribosyl)anthranilate = 1-(2-carboxyphenylamino)-1-deoxy-D-ribulose 5-phosphate. The protein operates within amino-acid biosynthesis; L-tryptophan biosynthesis; L-tryptophan from chorismate: step 3/5. This is N-(5'-phosphoribosyl)anthranilate isomerase from Methanococcus maripaludis (strain C7 / ATCC BAA-1331).